The chain runs to 548 residues: Chaperonin GroEL (548 aa).

Residues 30-33 (TLGP), Lys51, 87-91 (DGTTT), Gly415, and Asp495 each bind ATP.

This sequence belongs to the chaperonin (HSP60) family. In terms of assembly, forms a cylinder of 14 subunits composed of two heptameric rings stacked back-to-back. Interacts with the co-chaperonin GroES.

It localises to the cytoplasm. The catalysed reaction is ATP + H2O + a folded polypeptide = ADP + phosphate + an unfolded polypeptide.. Together with its co-chaperonin GroES, plays an essential role in assisting protein folding. The GroEL-GroES system forms a nano-cage that allows encapsulation of the non-native substrate proteins and provides a physical environment optimized to promote and accelerate protein folding. In Pseudoalteromonas atlantica (strain T6c / ATCC BAA-1087), this protein is Chaperonin GroEL.